The sequence spans 667 residues: UvrABC system protein B (667 aa).

The Helicase ATP-binding domain occupies 25 to 180; sequence DSLQNQHRFQ…LLRALVSVQY (156 aa). 38–45 is an ATP binding site; that stretch reads GATGTGKT. The Beta-hairpin signature appears at 91-114; it reads YYDYYQPEAYIPVSDTYIEKSSSI. Residues 429 to 595 form the Helicase C-terminal domain; sequence QVDDLLGEIK…PIVKRSSNSI (167 aa). Positions 626-661 constitute a UVR domain; it reads PELIQQLEAQMKEAAKNLEFESAAKYRDRIKQLRDK.

Belongs to the UvrB family. Forms a heterotetramer with UvrA during the search for lesions. Interacts with UvrC in an incision complex.

The protein localises to the cytoplasm. Functionally, the UvrABC repair system catalyzes the recognition and processing of DNA lesions. A damage recognition complex composed of 2 UvrA and 2 UvrB subunits scans DNA for abnormalities. Upon binding of the UvrA(2)B(2) complex to a putative damaged site, the DNA wraps around one UvrB monomer. DNA wrap is dependent on ATP binding by UvrB and probably causes local melting of the DNA helix, facilitating insertion of UvrB beta-hairpin between the DNA strands. Then UvrB probes one DNA strand for the presence of a lesion. If a lesion is found the UvrA subunits dissociate and the UvrB-DNA preincision complex is formed. This complex is subsequently bound by UvrC and the second UvrB is released. If no lesion is found, the DNA wraps around the other UvrB subunit that will check the other stand for damage. The chain is UvrABC system protein B from Microcystis aeruginosa (strain NIES-843 / IAM M-2473).